A 662-amino-acid polypeptide reads, in one-letter code: Glycogen debranching enzyme (662 aa).

D338 serves as the catalytic Nucleophile. E373 (proton donor) is an active-site residue.

Belongs to the glycosyl hydrolase 13 family.

It catalyses the reaction Hydrolysis of (1-&gt;6)-alpha-D-glucosidic linkages to branches with degrees of polymerization of three or four glucose residues in limit dextrin.. The protein operates within glycan degradation; glycogen degradation. Functionally, removes maltotriose and maltotetraose chains that are attached by 1,6-alpha-linkage to the limit dextrin main chain, generating a debranched limit dextrin. The protein is Glycogen debranching enzyme of Yersinia enterocolitica serotype O:8 / biotype 1B (strain NCTC 13174 / 8081).